A 118-amino-acid chain; its full sequence is V-type proton ATPase subunit G 1 (118 aa).

At Ala-2 the chain carries N-acetylalanine. Residues 19–42 form a disordered region; sequence AEKVSEARKRKNRRLKQAKEEAQA.

It belongs to the V-ATPase G subunit family. V-ATPase is a heteromultimeric enzyme made up of two complexes: the ATP-hydrolytic V1 complex and the proton translocation V0 complex. The V1 complex consists of three catalytic AB heterodimers that form a heterohexamer, three peripheral stalks each consisting of EG heterodimers, one central rotor including subunits D and F, and the regulatory subunits C and H. The proton translocation complex V0 consists of the proton transport subunit a, a ring of proteolipid subunits c9c'', rotary subunit d, subunits e and f, and the accessory subunits ATP6AP1/Ac45 and ATP6AP2/PRR. Brain, heart, kidney and spleen.

The protein resides in the apical cell membrane. Functionally, subunit of the V1 complex of vacuolar(H+)-ATPase (V-ATPase), a multisubunit enzyme composed of a peripheral complex (V1) that hydrolyzes ATP and a membrane integral complex (V0) that translocates protons. V-ATPase is responsible for acidifying and maintaining the pH of intracellular compartments and in some cell types, is targeted to the plasma membrane, where it is responsible for acidifying the extracellular environment. In aerobic conditions, involved in intracellular iron homeostasis, thus triggering the activity of Fe(2+) prolyl hydroxylase (PHD) enzymes, and leading to HIF1A hydroxylation and subsequent proteasomal degradation. The chain is V-type proton ATPase subunit G 1 (ATP6V1G1) from Bos taurus (Bovine).